The sequence spans 512 residues: Gamma-aminobutyric acid receptor subunit beta-2 (512 aa).

The N-terminal stretch at 1-25 (MWRVRKRGYFGIWSFPLIIAAVCAQ) is a signal peptide. At 26–241 (SVNDPSNMSL…LSLSFKLKRN (216 aa)) the chain is on the extracellular side. Asparagine 32 and asparagine 104 each carry an N-linked (GlcNAc...) asparagine glycan. Residue tyrosine 121 coordinates histamine. A disulfide bridge connects residues cysteine 160 and cysteine 174. Asparagine 173 carries an N-linked (GlcNAc...) asparagine glycan. Residues 180–181 (SY) and threonine 226 contribute to the histamine site. Residues tyrosine 181 and threonine 226 each contribute to the 4-aminobutanoate site. A helical membrane pass occupies residues 242–262 (IGYFILQTYMPSILITILSWV). Residues 263–272 (SFWINYDASA) are Cytoplasmic-facing. A helical transmembrane segment spans residues 273–292 (ARVALGITTVLTMTTINTHL). Residues 293-310 (RETLPKIPYVKAIDMYLM) lie on the Extracellular side of the membrane. The helical transmembrane segment at 311–331 (GCFVFVFMALLEYALVNYIFF) threads the bilayer. Residues 332–490 (GRGPQRQKKA…LTDVNAIDRW (159 aa)) are Cytoplasmic-facing. Tyrosine 441 carries the post-translational modification Phosphotyrosine. The helical transmembrane segment at 491–511 (SRIFFPVVFSFFNIVYWLYYV) threads the bilayer. Asparagine 512 is a topological domain (extracellular).

The protein belongs to the ligand-gated ion channel (TC 1.A.9) family. Gamma-aminobutyric acid receptor (TC 1.A.9.5) subfamily. GABRB2 sub-subfamily. In terms of assembly, heteropentamer, formed by a combination of alpha (GABRA1-6), beta (GABRB1-3), gamma (GABRG1-3), delta (GABRD), epsilon (GABRE), rho (GABRR1-3), pi (GABRP) and theta (GABRQ) chains, each subunit exhibiting distinct physiological and pharmacological properties. Interacts with UBQLN1. May interact with KIF21B. Identified in a complex of 720 kDa composed of LHFPL4, NLGN2, GABRA1, GABRB2, GABRG2 and GABRB3. Isoform 1 and isoform 2 show reduced expression in schizophrenic brain. Isoform 3 shows increased expression in schizophrenic and bipolar disorder brains while isoform 4 shows reduced expression.

It localises to the postsynaptic cell membrane. Its subcellular location is the cell membrane. The protein resides in the cytoplasmic vesicle membrane. The enzyme catalyses chloride(in) = chloride(out). With respect to regulation, allosterically activated by benzodiazepines. Allosterically activated by the anesthetic etomidate. Inhibited by the antagonist bicuculline. Potentiated by histamine. Functionally, beta subunit of the heteropentameric ligand-gated chloride channel gated by gamma-aminobutyric acid (GABA), a major inhibitory neurotransmitter in the brain. GABA-gated chloride channels, also named GABA(A) receptors (GABAAR), consist of five subunits arranged around a central pore and contain GABA active binding site(s) located at the alpha and beta subunit interface(s). When activated by GABA, GABAARs selectively allow the flow of chloride anions across the cell membrane down their electrochemical gradient. Chloride influx into the postsynaptic neuron following GABAAR opening decreases the neuron ability to generate a new action potential, thereby reducing nerve transmission. GABAARs containing alpha-1 and beta-2 or -3 subunits exhibit synaptogenic activity; the gamma-2 subunit being necessary but not sufficient to induce rapid synaptic contacts formation. Extrasynaptic beta-2 receptors contribute to the tonic GABAergic inhibition. Beta-containing GABAARs can simultaneously bind GABA and histamine where histamine binds at the interface of two neighboring beta subunits, which may be involved in the regulation of sleep and wakefulness. This is Gamma-aminobutyric acid receptor subunit beta-2 from Homo sapiens (Human).